Reading from the N-terminus, the 232-residue chain is Clarin-1 (232 aa).

The helical transmembrane segment at 8–28 (IIFCMAGVLSFLCALGVVTAV) threads the bilayer. N48 is a glycosylation site (N-linked (GlcNAc...) asparagine). The next 2 helical transmembrane spans lie at 101–121 (IILF…FFMY) and 135–155 (LGLY…MILF). An N-linked (GlcNAc...) asparagine glycan is attached at N184. The helical transmembrane segment at 186 to 206 (TTSFWVVFICFFVHFLNGLLI) threads the bilayer.

This sequence belongs to the clarin family.

The protein localises to the cell membrane. In terms of biological role, may have a role in the excitatory ribbon synapse junctions between hair cells and cochlear ganglion cells and presumably also in analogous synapses within the retina. The polypeptide is Clarin-1 (Clrn1) (Mus musculus (Mouse)).